Consider the following 402-residue polypeptide: Triose phosphate/phosphate translocator, chloroplastic (402 aa).

A chloroplast-targeting transit peptide spans M1–P72. Topologically, residues A73–P96 are chloroplast intermembrane. The chain crosses the membrane as a helical span at residues A97–L117. Topologically, residues N118–Y129 are lumenal. The helical transmembrane segment at F130–G150 threads the bilayer. Topologically, residues L151–Q207 are chloroplast intermembrane. The helical transmembrane segment at F208 to G228 threads the bilayer. At V229–N272 the chain is on the lumenal side. A helical transmembrane segment spans residues I273–I292. Topologically, residues E293 to Q370 are chloroplast intermembrane. The chain crosses the membrane as a helical span at residues T371–Q391. Residues I392–A402 lie on the Lumenal side of the membrane.

It belongs to the TPT transporter family. TPT (TC 2.A.7.9) subfamily. In terms of assembly, homodimer.

The protein localises to the plastid. It is found in the chloroplast membrane. Its function is as follows. Mediates the export of fixed carbons from the chloroplasts into the cytosol in the form of triose phosphates. The protein is Triose phosphate/phosphate translocator, chloroplastic of Pisum sativum (Garden pea).